Reading from the N-terminus, the 350-residue chain is Putative F-box protein At1g23770 (350 aa).

Residues 1 to 15 show a composition bias toward polar residues; the sequence is MDTGFADSNNDSSPG. Positions 1-29 are disordered; sequence MDTGFADSNNDSSPGEGSKRGNSGIEGPV. An F-box domain is found at 206–252; the sequence is PPCLMLLPTELKLKILELLPGVSIGYMACVCTEMRYLASDNDLWEHK.

This Arabidopsis thaliana (Mouse-ear cress) protein is Putative F-box protein At1g23770.